A 372-amino-acid chain; its full sequence is Rab9 effector protein with kelch motifs (372 aa).

5 Kelch repeats span residues 49 to 95 (KVFI…FIPS), 100 to 146 (SIWV…TSSA), 151 to 203 (QLYV…AAGT), 204 to 250 (KLFI…SAVA), and 254 to 303 (HLYV…IIPW). The tract at residues 309-341 (SEKEDSNSATVNRDAEKGDSTEKGVTQGGDSQE) is disordered. Positions 321-330 (RDAEKGDSTE) are enriched in basic and acidic residues. One copy of the Kelch 6 repeat lies at 349 to 372 (LCFVFGGMNTEGEIYDDCIVTAVD).

Interacts with PIKFYVE; the interaction recruits RABEPK to the endosomal membrane. Interacts with RAB9 in its GTP-bound conformation. Phosphorylated on Ser residues by PIKFYVE.

It is found in the cytoplasm. The protein resides in the endosome membrane. Functionally, rab9 effector required for endosome to trans-Golgi network (TGN) transport. The sequence is that of Rab9 effector protein with kelch motifs (RABEPK) from Bos taurus (Bovine).